The primary structure comprises 626 residues: Mitogen-activated protein kinase kinase kinase 3 (626 aa).

The PB1 domain occupies 44–123 (DVRIKFEHNG…KSLRILLLSQ (80 aa)). Disordered regions lie at residues 125 to 184 (RNHT…YVPE) and 218 to 273 (SSAE…VKGG). Polar residues-rich tracts occupy residues 128 to 137 (TSSSPHSGVS), 144 to 155 (PSQSAGDINTIY), 165 to 174 (LSVSSQNPGR), and 219 to 247 (SAEN…QMSR). Phosphoserine occurs at positions 147 and 166. Phosphoserine is present on residues serine 250 and serine 312. Positions 250–270 (SFPDNRKECSDRETQLYDKGV) are enriched in basic and acidic residues. The residue at position 337 (serine 337) is a Phosphoserine; by SGK1. Serine 340 bears the Phosphoserine mark. The Protein kinase domain occupies 362-622 (WRRGKLLGQG…AEELLTHHFA (261 aa)). ATP is bound by residues 368-376 (LGQGAFGRV) and lysine 391. Aspartate 489 functions as the Proton acceptor in the catalytic mechanism.

The protein belongs to the protein kinase superfamily. STE Ser/Thr protein kinase family. MAP kinase kinase kinase subfamily. In terms of assembly, binds both upstream activators and downstream substrates in multimolecular complexes. Part of a complex with MAP2K3, RAC1 and CCM2. Interacts with MAP2K5 and SPAG9. The cofactor is Mg(2+). In terms of processing, phosphorylation at Ser-166 and Ser-337 by SGK1 inhibits its activity.

It catalyses the reaction L-seryl-[protein] + ATP = O-phospho-L-seryl-[protein] + ADP + H(+). It carries out the reaction L-threonyl-[protein] + ATP = O-phospho-L-threonyl-[protein] + ADP + H(+). Its activity is regulated as follows. Activated by phosphorylation on Thr-530. Functionally, component of a protein kinase signal transduction cascade. Mediates activation of the NF-kappa-B, AP1 and DDIT3 transcriptional regulators. The polypeptide is Mitogen-activated protein kinase kinase kinase 3 (Map3k3) (Mus musculus (Mouse)).